Reading from the N-terminus, the 336-residue chain is N-lysine methyltransferase KMT5A (336 aa).

The interval 1 to 112 (MGRGKKMSKP…KPSEQRETEC (112 aa)) is disordered. Residues 67–93 (SVAHHESKCPGKPLTETRKKAEVEKKR) are compositionally biased toward basic and acidic residues. The 122-residue stretch at 200 to 321 (EGMKMDMITG…VGEELLYDYG (122 aa)) folds into the SET domain. Residues 210–212 (KGR), tyrosine 255, and 282–283 (NH) contribute to the S-adenosyl-L-methionine site.

It belongs to the class V-like SAM-binding methyltransferase superfamily. Histone-lysine methyltransferase family. PR/SET subfamily.

It localises to the nucleus. Its subcellular location is the chromosome. It carries out the reaction L-lysyl(20)-[histone H4] + S-adenosyl-L-methionine = N(6)-methyl-L-lysyl(20)-[histone H4] + S-adenosyl-L-homocysteine + H(+). The catalysed reaction is L-lysyl-[protein] + S-adenosyl-L-methionine = N(6)-methyl-L-lysyl-[protein] + S-adenosyl-L-homocysteine + H(+). Its function is as follows. Protein-lysine N-methyltransferase that monomethylates both histones and non-histone proteins. Specifically monomethylates 'Lys-20' of histone H4 (H4K20me1). H4K20me1 is enriched during mitosis and represents a specific tag for epigenetic transcriptional repression. Mainly functions in euchromatin regions, thereby playing a central role in the silencing of euchromatic genes. Required for cell proliferation, probably by contributing to the maintenance of proper higher-order structure of DNA during mitosis. Involved in chromosome condensation and proper cytokinesis. Nucleosomes are preferred as substrate compared to free histones. Mediates monomethylation of p53/TP53 at 'Lys-382', leading to repress p53/TP53-target genes. Plays a negative role in TGF-beta response regulation and a positive role in cell migration. The polypeptide is N-lysine methyltransferase KMT5A (Xenopus tropicalis (Western clawed frog)).